A 556-amino-acid chain; its full sequence is Formate--tetrahydrofolate ligase (556 aa).

65–72 (TPAGEGKS) is a binding site for ATP.

Belongs to the formate--tetrahydrofolate ligase family.

The catalysed reaction is (6S)-5,6,7,8-tetrahydrofolate + formate + ATP = (6R)-10-formyltetrahydrofolate + ADP + phosphate. It participates in one-carbon metabolism; tetrahydrofolate interconversion. This chain is Formate--tetrahydrofolate ligase, found in Streptococcus thermophilus (strain ATCC BAA-250 / LMG 18311).